A 400-amino-acid chain; its full sequence is Glutamyl-tRNA reductase (400 aa).

Substrate contacts are provided by residues 45 to 48 (TCNR), Ser-103, 108 to 110 (EDQ), and Gln-114. The active-site Nucleophile is Cys-46. 179–184 (GYGEIG) serves as a coordination point for NADP(+).

The protein belongs to the glutamyl-tRNA reductase family. As to quaternary structure, homodimer.

The catalysed reaction is (S)-4-amino-5-oxopentanoate + tRNA(Glu) + NADP(+) = L-glutamyl-tRNA(Glu) + NADPH + H(+). It participates in porphyrin-containing compound metabolism; protoporphyrin-IX biosynthesis; 5-aminolevulinate from L-glutamyl-tRNA(Glu): step 1/2. Catalyzes the NADPH-dependent reduction of glutamyl-tRNA(Glu) to glutamate 1-semialdehyde (GSA). This chain is Glutamyl-tRNA reductase, found in Clostridium perfringens (strain ATCC 13124 / DSM 756 / JCM 1290 / NCIMB 6125 / NCTC 8237 / Type A).